The following is a 236-amino-acid chain: Peroxisomal coenzyme A diphosphatase NUDT7 (236 aa).

Lys20 is modified (N6-succinyllysine). Positions 37-169 (SNKFSVLVPL…QKQITQSGRD (133 aa)) constitute a Nudix hydrolase domain. Residues 77 to 98 (KRDPVDTDDTATALREAQEEVG) carry the Nudix box motif. Positions 92 and 96 each coordinate Mg(2+). Position 178 is an N6-succinyllysine (Lys178). The Microbody targeting signal motif lies at 234–236 (SKL).

This sequence belongs to the Nudix hydrolase family. PCD1 subfamily. Monomer. The cofactor is Mn(2+). It depends on Mg(2+) as a cofactor. Highly expressed in liver, brown adipose tissue and heart. Expressed at intermediate level in lung and kidney and at low level in brain. As to expression, expressed in liver, brown adipose tissue and heart at 20 times lower levels than isoform 1.

It localises to the peroxisome. The enzyme catalyses hexanoyl-CoA + H2O = hexanoyl-4'-phosphopantetheine + adenosine 3',5'-bisphosphate + 2 H(+). It carries out the reaction octanoyl-CoA + H2O = S-octanoyl-4'-phosphopantetheine + adenosine 3',5'-bisphosphate + 2 H(+). It catalyses the reaction butanoyl-CoA + H2O = S-butanoyl-4'-phosphopantetheine + adenosine 3',5'-bisphosphate + 2 H(+). The catalysed reaction is decanoyl-CoA + H2O = decanoyl-4'-phosphopantetheine + adenosine 3',5'-bisphosphate + 2 H(+). The enzyme catalyses dodecanoyl-CoA + H2O = S-dodecanoyl-4'-phosphopantetheine + adenosine 3',5'-bisphosphate + 2 H(+). It carries out the reaction tetradecanoyl-CoA + H2O = tetradecanoyl-4'-phosphopantetheine + adenosine 3',5'-bisphosphate + 2 H(+). It catalyses the reaction choloyl-CoA + H2O = S-choloyl-4'-phosphopantetheine + adenosine 3',5'-bisphosphate + 2 H(+). The catalysed reaction is 3alpha,7alpha,12alpha-trihydroxy-5beta-cholestan-26-oyl-CoA + H2O = 3alpha,7alpha,12alpha-trihydroxy-5beta-cholestan-26-oyl-4'-phosphopantetheine + adenosine 3',5'-bisphosphate + 2 H(+). The enzyme catalyses acetyl-CoA + H2O = S-acetyl-4'-phosphopantetheine + adenosine 3',5'-bisphosphate + 2 H(+). It carries out the reaction CoA + H2O = (R)-4'-phosphopantetheine + adenosine 3',5'-bisphosphate + 2 H(+). It catalyses the reaction propanoyl-CoA + H2O = propanoyl-4'-phosphopantetheine + adenosine 3',5'-bisphosphate + 2 H(+). The catalysed reaction is malonyl-CoA + H2O = malonyl-4'-phosphopantetheine + adenosine 3',5'-bisphosphate + 2 H(+). The enzyme catalyses succinyl-CoA + H2O = succinyl-4'-phosphopantetheine + adenosine 3',5'-bisphosphate + 2 H(+). It carries out the reaction a 5'-end CoA-ribonucleoside in mRNA + H2O = a 5'-end phospho-adenosine-phospho-ribonucleoside in mRNA + (R)-4'-phosphopantetheine + 2 H(+). With respect to regulation, inhibited by fluoride. In terms of biological role, fatty acyl-coenzyme A (CoA) diphosphatase that hydrolyzes fatty acyl-CoA to yield acyl-4'-phosphopantetheine and adenosine 3',5'-bisphosphate. Cleaves CoA, CoA esters and oxidized CoA with similar efficiencies. Preferentially hydrolyzes medium-chain acyl-CoAs and bile acid-CoAs. Has no activity toward NDP-sugars, CDP-alcohols, (deoxy)nucleoside 5'-triphosphates, nucleoside 5'-di or monophosphates, diadenosine polyphosphates, NAD, NADH, NADP, NADPH or thymidine-5'-monophospho-p-nitrophenyl ester. May be required to eliminate oxidized CoA from peroxisomes, or regulate CoA and acyl-CoA levels in this organelle in response to metabolic demand. Does not play a role in U8 snoRNA decapping activity. Binds U8 snoRNA. Exhibits decapping activity towards dpCoA-capped RNAs in vitro. The protein is Peroxisomal coenzyme A diphosphatase NUDT7 of Mus musculus (Mouse).